A 439-amino-acid chain; its full sequence is 23S rRNA (uracil(1939)-C(5))-methyltransferase RlmD (439 aa).

The region spanning 1 to 54 is the TRAM domain; sequence MTAPVLIESLDQEGRGVAHAEGKVIFIEGALPGEVVTYNAYRRKPSFELAQVGQ. C67, C73, C76, and C155 together coordinate [4Fe-4S] cluster. S-adenosyl-L-methionine-binding residues include Q264, F293, N298, E314, N342, and D363. Residue C391 is the Nucleophile of the active site.

Belongs to the class I-like SAM-binding methyltransferase superfamily. RNA M5U methyltransferase family. RlmD subfamily.

It catalyses the reaction uridine(1939) in 23S rRNA + S-adenosyl-L-methionine = 5-methyluridine(1939) in 23S rRNA + S-adenosyl-L-homocysteine + H(+). In terms of biological role, catalyzes the formation of 5-methyl-uridine at position 1939 (m5U1939) in 23S rRNA. This chain is 23S rRNA (uracil(1939)-C(5))-methyltransferase RlmD, found in Nitrosospira multiformis (strain ATCC 25196 / NCIMB 11849 / C 71).